Reading from the N-terminus, the 106-residue chain is Putative membrane protein insertion efficiency factor (106 aa).

This sequence belongs to the UPF0161 family.

The protein localises to the cell inner membrane. Could be involved in insertion of integral membrane proteins into the membrane. In Acinetobacter baumannii (strain AB307-0294), this protein is Putative membrane protein insertion efficiency factor.